Consider the following 232-residue polypeptide: Large ribosomal subunit protein uL1 (232 aa).

It belongs to the universal ribosomal protein uL1 family. As to quaternary structure, part of the 50S ribosomal subunit.

Functionally, binds directly to 23S rRNA. The L1 stalk is quite mobile in the ribosome, and is involved in E site tRNA release. Protein L1 is also a translational repressor protein, it controls the translation of the L11 operon by binding to its mRNA. The chain is Large ribosomal subunit protein uL1 from Chlamydia trachomatis serovar L2b (strain UCH-1/proctitis).